A 22-amino-acid chain; its full sequence is Brevinin-1OKd (22 aa).

Lys22 carries the post-translational modification Lysine amide.

In terms of tissue distribution, expressed by the skin glands.

It localises to the secreted. Its function is as follows. Antimicrobial peptide. This Nidirana okinavana (Kampira Falls frog) protein is Brevinin-1OKd.